The sequence spans 351 residues: Tropomodulin-2 (351 aa).

Ser-25 carries the phosphoserine modification.

The protein belongs to the tropomodulin family. Binds to the N-terminus of tropomyosin and to actin. In terms of tissue distribution, neuronal-tissue specific.

The protein localises to the cytoplasm. It is found in the cytoskeleton. Functionally, blocks the elongation and depolymerization of the actin filaments at the pointed end. The Tmod/TM complex contributes to the formation of the short actin protofilament, which in turn defines the geometry of the membrane skeleton. This chain is Tropomodulin-2 (TMOD2), found in Homo sapiens (Human).